A 477-amino-acid chain; its full sequence is UDP-N-acetylmuramoylalanine--D-glutamate ligase (477 aa).

ATP is bound at residue 127 to 133 (GTNGKTT).

This sequence belongs to the MurCDEF family.

The protein localises to the cytoplasm. The enzyme catalyses UDP-N-acetyl-alpha-D-muramoyl-L-alanine + D-glutamate + ATP = UDP-N-acetyl-alpha-D-muramoyl-L-alanyl-D-glutamate + ADP + phosphate + H(+). It functions in the pathway cell wall biogenesis; peptidoglycan biosynthesis. In terms of biological role, cell wall formation. Catalyzes the addition of glutamate to the nucleotide precursor UDP-N-acetylmuramoyl-L-alanine (UMA). The chain is UDP-N-acetylmuramoylalanine--D-glutamate ligase from Prochlorococcus marinus (strain MIT 9515).